A 215-amino-acid polypeptide reads, in one-letter code: Cytochrome b6 (215 aa).

The chain crosses the membrane as a helical span at residues 32–52; the sequence is IFYCLGGITLTCFLVQVATGF. Cys35 provides a ligand contact to heme c. The heme b site is built by His86 and His100. 3 helical membrane-spanning segments follow: residues 90-110, 116-136, and 186-206; these read ASMMVLMMILHVFRVYLTGGF, LTWITGVILAVLTVSFGVTGY, and LHTFVLPLLTAVFMLMHFLMI. Residues His187 and His202 each coordinate heme b.

It belongs to the cytochrome b family. PetB subfamily. In terms of assembly, the 4 large subunits of the cytochrome b6-f complex are cytochrome b6, subunit IV (17 kDa polypeptide, PetD), cytochrome f and the Rieske protein, while the 4 small subunits are PetG, PetL, PetM and PetN. The complex functions as a dimer. Requires heme b as cofactor. Heme c is required as a cofactor.

The protein localises to the plastid. The protein resides in the chloroplast thylakoid membrane. Its function is as follows. Component of the cytochrome b6-f complex, which mediates electron transfer between photosystem II (PSII) and photosystem I (PSI), cyclic electron flow around PSI, and state transitions. The chain is Cytochrome b6 from Psilotum nudum (Whisk fern).